We begin with the raw amino-acid sequence, 290 residues long: AA9 family lytic polysaccharide monooxygenase A (290 aa).

A signal peptide spans 1-17 (MKLSLLASVALVPFVSA). Cu(2+) is bound by residues His-18 and His-101. Cys-67 and Cys-189 are joined by a disulfide. His-176 contributes to the O2 binding site. Tyr-187 is a Cu(2+) binding site. 2 N-linked (GlcNAc...) asparagine glycosylation sites follow: Asn-220 and Asn-254. The interval 240–290 (GGSGSGSSSYSKVANVTSSDESSQSGASSSQGTVSTCPNKYNRRHARQFKP) is disordered. Low complexity predominate over residues 245–275 (GSSSYSKVANVTSSDESSQSGASSSQGTVST). The segment covering 280–290 (YNRRHARQFKP) has biased composition (basic residues).

It belongs to the polysaccharide monooxygenase AA9 family. Cu(2+) is required as a cofactor.

Its subcellular location is the secreted. It catalyses the reaction [(1-&gt;4)-beta-D-glucosyl]n+m + reduced acceptor + O2 = 4-dehydro-beta-D-glucosyl-[(1-&gt;4)-beta-D-glucosyl]n-1 + [(1-&gt;4)-beta-D-glucosyl]m + acceptor + H2O.. In terms of biological role, lytic polysaccharide monooxygenase (LPMO) that depolymerizes crystalline and amorphous polysaccharides via the oxidation of scissile alpha- or beta-(1-4)-glycosidic bonds, yielding exclusively C1 oxidation products. Catalysis by LPMOs requires the reduction of the active-site copper from Cu(II) to Cu(I) by a reducing agent and H(2)O(2) or O(2) as a cosubstrate. This Aspergillus fumigatus (strain ATCC MYA-4609 / CBS 101355 / FGSC A1100 / Af293) (Neosartorya fumigata) protein is AA9 family lytic polysaccharide monooxygenase A.